Reading from the N-terminus, the 283-residue chain is Glutamate racemase (283 aa).

Substrate is bound by residues 28–29 (DS) and 60–61 (YG). The Proton donor/acceptor role is filled by Cys-92. 93 to 94 (NS) is a binding site for substrate. The active-site Proton donor/acceptor is the Cys-204. 205–206 (TH) serves as a coordination point for substrate.

Belongs to the aspartate/glutamate racemases family.

The enzyme catalyses L-glutamate = D-glutamate. It participates in cell wall biogenesis; peptidoglycan biosynthesis. Provides the (R)-glutamate required for cell wall biosynthesis. This is Glutamate racemase from Erwinia tasmaniensis (strain DSM 17950 / CFBP 7177 / CIP 109463 / NCPPB 4357 / Et1/99).